Reading from the N-terminus, the 93-residue chain is UPF0147 protein MJ1419 (93 aa).

The protein belongs to the UPF0147 family.

This is UPF0147 protein MJ1419 from Methanocaldococcus jannaschii (strain ATCC 43067 / DSM 2661 / JAL-1 / JCM 10045 / NBRC 100440) (Methanococcus jannaschii).